Here is a 608-residue protein sequence, read N- to C-terminus: Nuclear protein localization protein 4 homolog (608 aa).

A2 bears the N-acetylalanine mark. K179 carries the post-translational modification N6-acetyllysine. An MPN domain is found at 226-363 (IMFENHTVAD…ICRLSPDGHF (138 aa)). The RanBP2-type zinc-finger motif lies at 580–608 (TSAMWACQHCTFMNQPGTGHCEMCSLPRT).

The protein belongs to the NPL4 family. As to quaternary structure, heterodimer with UFD1. The heterodimer binds ubiquitinated proteins. The heterodimer binds to VCP and inhibits Golgi membrane fusion. Interacts with ZFAND2B; probably through VCP.

Its subcellular location is the cytoplasm. The protein resides in the cytosol. It localises to the endoplasmic reticulum. It is found in the nucleus. It participates in protein degradation; proteasomal ubiquitin-dependent pathway. Its function is as follows. The ternary complex containing UFD1, VCP and NPLOC4 binds ubiquitinated proteins and is necessary for the export of misfolded proteins from the ER to the cytoplasm, where they are degraded by the proteasome. The NPLOC4-UFD1-VCP complex regulates spindle disassembly at the end of mitosis and is necessary for the formation of a closed nuclear envelope. Acts as a negative regulator of type I interferon production via the complex formed with VCP and UFD1, which binds to RIGI and recruits RNF125 to promote ubiquitination and degradation of RIGI. This Mus musculus (Mouse) protein is Nuclear protein localization protein 4 homolog (Nploc4).